The sequence spans 273 residues: Undecaprenyl-diphosphatase (273 aa).

The next 7 membrane-spanning stretches (helical) occupy residues 6-26 (SLLI…LPVS), 45-65 (AKTF…VMFW), 90-110 (LTLI…LLFH), 116-136 (LFNP…LIAA), 190-210 (YAAS…ATAL), 222-242 (GDIP…LIAI), and 252-272 (ISFI…YVVF).

It belongs to the UppP family.

The protein resides in the cell inner membrane. It catalyses the reaction di-trans,octa-cis-undecaprenyl diphosphate + H2O = di-trans,octa-cis-undecaprenyl phosphate + phosphate + H(+). In terms of biological role, catalyzes the dephosphorylation of undecaprenyl diphosphate (UPP). Confers resistance to bacitracin. This is Undecaprenyl-diphosphatase from Escherichia coli O7:K1 (strain IAI39 / ExPEC).